The following is a 255-amino-acid chain: Ribonuclease PH (255 aa).

Phosphate contacts are provided by residues Arg86 and 124 to 126 (GTR).

It belongs to the RNase PH family. Homohexameric ring arranged as a trimer of dimers.

The enzyme catalyses tRNA(n+1) + phosphate = tRNA(n) + a ribonucleoside 5'-diphosphate. Functionally, phosphorolytic 3'-5' exoribonuclease that plays an important role in tRNA 3'-end maturation. Removes nucleotide residues following the 3'-CCA terminus of tRNAs; can also add nucleotides to the ends of RNA molecules by using nucleoside diphosphates as substrates, but this may not be physiologically important. Probably plays a role in initiation of 16S rRNA degradation (leading to ribosome degradation) during starvation. This Geobacillus thermodenitrificans (strain NG80-2) protein is Ribonuclease PH.